The chain runs to 47 residues: uncharacterized protein (47 aa).

Residues 22-47 (VGPRTKRANQASPPVGRHSSRLMCPG) are disordered.

This is an uncharacterized protein from Saccharomyces cerevisiae (strain ATCC 204508 / S288c) (Baker's yeast).